Consider the following 552-residue polypeptide: uncharacterized protein (552 aa).

The interval 1-59 (MPLEKTNTHDSTATVEDQEATDNPMHLTQSRMLDLAGNPNRTTSRQSETLFPNGVDLNY) is disordered. The span at 39–50 (PNRTTSRQSETL) shows a compositional bias: polar residues. 12 consecutive transmembrane segments (helical) span residues 116-136 (ITIV…VIAG), 158-178 (LMVV…EMIG), 181-201 (IVYL…ALAP), 203-223 (IACL…PLTL), 238-258 (GLAI…GPLV), 271-291 (WIFW…LPVP), 345-365 (ILVC…GYFF), 383-403 (GLMF…TPFL), 424-444 (LVGM…FAWT), 450-470 (IWIG…LFYF), 484-506 (CASA…PLFI), and 519-539 (FFLL…FYLF).

Belongs to the major facilitator superfamily.

Its subcellular location is the membrane. This is an uncharacterized protein from Schizosaccharomyces pombe (strain 972 / ATCC 24843) (Fission yeast).